We begin with the raw amino-acid sequence, 254 residues long: PF03932 family protein CutC (254 aa).

This sequence belongs to the CutC family.

It is found in the cytoplasm. This chain is PF03932 family protein CutC, found in Yersinia pestis bv. Antiqua (strain Angola).